Here is a 457-residue protein sequence, read N- to C-terminus: tRNA-2-methylthio-N(6)-dimethylallyladenosine synthase (457 aa).

One can recognise an MTTase N-terminal domain in the interval 3-120 (KKVYIKTFGC…LPQMIDQRRA (118 aa)). [4Fe-4S] cluster contacts are provided by cysteine 12, cysteine 49, cysteine 83, cysteine 157, cysteine 161, and cysteine 164. The region spanning 143 to 377 (RVEGPSAFVS…QATIEENVAR (235 aa)) is the Radical SAM core domain. Residues 380-447 (RSMVGKVERI…PHSLRGELLL (68 aa)) enclose the TRAM domain.

It belongs to the methylthiotransferase family. MiaB subfamily. In terms of assembly, monomer. [4Fe-4S] cluster serves as cofactor.

The protein localises to the cytoplasm. The catalysed reaction is N(6)-dimethylallyladenosine(37) in tRNA + (sulfur carrier)-SH + AH2 + 2 S-adenosyl-L-methionine = 2-methylsulfanyl-N(6)-dimethylallyladenosine(37) in tRNA + (sulfur carrier)-H + 5'-deoxyadenosine + L-methionine + A + S-adenosyl-L-homocysteine + 2 H(+). Functionally, catalyzes the methylthiolation of N6-(dimethylallyl)adenosine (i(6)A), leading to the formation of 2-methylthio-N6-(dimethylallyl)adenosine (ms(2)i(6)A) at position 37 in tRNAs that read codons beginning with uridine. This chain is tRNA-2-methylthio-N(6)-dimethylallyladenosine synthase, found in Burkholderia ambifaria (strain MC40-6).